The chain runs to 977 residues: Disks large-associated protein 3 (977 aa).

A compositionally biased stretch (basic and acidic residues) spans M1–S10. Disordered stretches follow at residues M1–D24, A52–G96, F137–S167, A181–A289, A398–A417, and P529–G582. Residues G53–G73 are compositionally biased toward low complexity. S58 carries the phosphoserine modification. Gly residues predominate over residues P74–S87. The span at P189 to G201 shows a compositional bias: basic and acidic residues. The span at S221–D245 shows a compositional bias: basic residues. Residues G258–G271 are compositionally biased toward low complexity. Phosphoserine occurs at positions 404, 407, 410, and 414. Positions A538 to Q547 are enriched in pro residues. S641 and S643 each carry phosphoserine. Disordered stretches follow at residues E739 to P788 and E906 to Q939. 2 stretches are compositionally biased toward basic and acidic residues: residues G767–S777 and P925–Q939. Phosphoserine occurs at positions 930, 933, and 965.

This sequence belongs to the SAPAP family. As to quaternary structure, interacts with DLG4/PSD-95. As to expression, highly expressed in central and peripherical nervous system (at protein level).

It is found in the cell membrane. The protein resides in the postsynaptic density. The protein localises to the synapse. In terms of biological role, may play a role in the molecular organization of synapses and neuronal cell signaling. Could be an adapter protein linking ion channel to the subsynaptic cytoskeleton. May induce enrichment of PSD-95/SAP90 at the plasma membrane. The sequence is that of Disks large-associated protein 3 (Dlgap3) from Mus musculus (Mouse).